The chain runs to 181 residues: Large ribosomal subunit protein uL5 (181 aa).

Belongs to the universal ribosomal protein uL5 family. As to quaternary structure, part of the 50S ribosomal subunit; part of the 5S rRNA/L5/L18/L25 subcomplex. Contacts the 5S rRNA and the P site tRNA. Forms a bridge to the 30S subunit in the 70S ribosome.

Functionally, this is one of the proteins that bind and probably mediate the attachment of the 5S RNA into the large ribosomal subunit, where it forms part of the central protuberance. In the 70S ribosome it contacts protein S13 of the 30S subunit (bridge B1b), connecting the 2 subunits; this bridge is implicated in subunit movement. Contacts the P site tRNA; the 5S rRNA and some of its associated proteins might help stabilize positioning of ribosome-bound tRNAs. This chain is Large ribosomal subunit protein uL5, found in Aster yellows witches'-broom phytoplasma (strain AYWB).